The sequence spans 102 residues: NADH-quinone oxidoreductase subunit K (102 aa).

Helical transmembrane passes span 4-24 (IGLNHYLVLSTILFAIGLVGV), 31-51 (LMLFFATEILLNSVNISFAAI), and 65-85 (FFVIAIAASEVAVGLGLLIVW).

Belongs to the complex I subunit 4L family. In terms of assembly, NDH-1 is composed of 14 different subunits. Subunits NuoA, H, J, K, L, M, N constitute the membrane sector of the complex.

Its subcellular location is the cell inner membrane. It catalyses the reaction a quinone + NADH + 5 H(+)(in) = a quinol + NAD(+) + 4 H(+)(out). In terms of biological role, NDH-1 shuttles electrons from NADH, via FMN and iron-sulfur (Fe-S) centers, to quinones in the respiratory chain. The immediate electron acceptor for the enzyme in this species is believed to be ubiquinone. Couples the redox reaction to proton translocation (for every two electrons transferred, four hydrogen ions are translocated across the cytoplasmic membrane), and thus conserves the redox energy in a proton gradient. This is NADH-quinone oxidoreductase subunit K from Sulfurimonas denitrificans (strain ATCC 33889 / DSM 1251) (Thiomicrospira denitrificans (strain ATCC 33889 / DSM 1251)).